The sequence spans 206 residues: Ras-related protein RABH1a (206 aa).

14 to 21 provides a ligand contact to GTP; that stretch reads GDQGVGKT. Residues 36 to 44 carry the Effector region motif; that stretch reads YQATIGIDF. Residues 62–66, 120–123, and 150–151 contribute to the GTP site; these read DTAGQ, NKTD, and SA. 2 S-geranylgeranyl cysteine lipidation sites follow: C204 and C206. C206 is subject to Cysteine methyl ester.

It belongs to the small GTPase superfamily. Rab family.

It localises to the golgi apparatus membrane. Protein transport. Regulator of membrane traffic from the Golgi apparatus towards the endoplasmic reticulum (ER). This chain is Ras-related protein RABH1a (RABH1A), found in Arabidopsis thaliana (Mouse-ear cress).